A 171-amino-acid chain; its full sequence is MPDNHKDPPDFNNLEMKLEERIELSREDQDIQSTSSSYPHCEALDHIVSMESTYDFHRQMAHKDLQKHRQEYEKASEKILELRKKLTDWNMDPKKRKWIEDDLDSLVRKQESALSRIRLAEKCTKRDLRNDPPPAYQPDDPLKDLRKNFEKKEKPTWNDVEKKKNGVFEFH.

The segment at 123 to 171 (CTKRDLRNDPPPAYQPDDPLKDLRKNFEKKEKPTWNDVEKKKNGVFEFH) is disordered. Over residues 140-171 (DPLKDLRKNFEKKEKPTWNDVEKKKNGVFEFH) the composition is skewed to basic and acidic residues.

This is an uncharacterized protein from Caenorhabditis elegans.